Consider the following 579-residue polypeptide: uncharacterized protein (579 aa).

Transmembrane regions (helical) follow at residues 20 to 40 (ALWA…VVAI), 54 to 74 (ATVV…MLVA), 86 to 106 (LYLI…LSSG), 142 to 162 (GVAL…GPLA), 174 to 194 (WIFF…AYLI), 204 to 224 (FDWF…FGLQ), 234 to 254 (WIWA…YWQA), 279 to 299 (IAII…YAQA), 310 to 330 (VLFA…GMII), 335 to 355 (PLCV…WLLC), 366 to 386 (LVLP…PLTV), and 467 to 487 (MLLP…LVDF). Positions 516-579 (REPEEDCDTQ…DTESTAPSAL (64 aa)) are disordered. Low complexity predominate over residues 526–540 (PLRASRPAAAAASRS). A compositionally biased stretch (polar residues) spans 570–579 (DTESTAPSAL).

The protein belongs to the major facilitator superfamily. EmrB family.

It is found in the cell membrane. This is an uncharacterized protein from Mycobacterium tuberculosis (strain ATCC 25618 / H37Rv).